A 112-amino-acid chain; its full sequence is Cytochrome c2 (112 aa).

Cysteine 14, cysteine 17, histidine 18, and methionine 91 together coordinate heme c.

Belongs to the cytochrome c family. In terms of processing, binds 1 heme c group covalently per subunit.

Functionally, cytochrome c2 is found mainly in purple, non-sulfur, photosynthetic bacteria where it functions as the electron donor to the oxidized bacteriochlorophyll in the photophosphorylation pathway. However, it may also have a role in the respiratory chain and is found in some non-photosynthetic bacteria. This Rhodospirillum rubrum protein is Cytochrome c2 (cycA).